The following is a 273-amino-acid chain: Karrikin insensitive 2 receptor B (273 aa).

Ser95 functions as the Nucleophile in the catalytic mechanism. Residue Asp217 is part of the active site.

The protein belongs to the AB hydrolase superfamily. Expressed in stigma.

The protein resides in the nucleus. It is found in the cytoplasm. Its function is as follows. May be involved in plant olfaction during volatile communication. This Petunia hybrida (Petunia) protein is Karrikin insensitive 2 receptor B.